The primary structure comprises 161 residues: uncharacterized protein (161 aa).

Polar residues predominate over residues 1 to 10 (MSKQQEQDTP). Disordered stretches follow at residues 1–20 (MSKQ…QRLQ), 55–84 (KKTR…MSDE), and 118–161 (LLQQ…ANNS). Residues 82 to 107 (SDEEYARQLQEEMDRLDASIQMDKEA) adopt a coiled-coil conformation. A compositionally biased stretch (low complexity) spans 144–161 (QQSSNTTTSSSCQSANNS).

This is an uncharacterized protein from Caenorhabditis elegans.